The primary structure comprises 306 residues: Abnormal cell migration protein 21 (306 aa).

TSP type-1 domains follow at residues 55 to 102 and 109 to 155; these read PGGW…AISS and FGSW…DECP. W58 and W61 each carry a C-linked (Man) tryptophan glycan. Intrachain disulfides connect C121-C149, C123-C154, and C134-C139. Residues 240–260 form a helical membrane-spanning segment; it reads CLPLHFAIPIFCFCILTGFLL.

Glycosylated via C-mannosylation by dpy-19 at Trp-58 and Trp-61.

Its subcellular location is the membrane. Required for determination of left/right asymmetry in nervous system. Acts together with unc-40 to control an initial left-right asymmetric polarization of the Q neuroblasts. Mig-21 and unc-40 may control the asymmetry in Wnt signaling response by restricting posterior polarization to one of the 2 Q neuroblasts. Involved in left-side QL posterior migration. In right-side QR, unc-40 and mig-21 pathways mutually inhibit each other in posterior migration, allowing anterior QR migration. This chain is Abnormal cell migration protein 21 (mig-21), found in Caenorhabditis elegans.